Consider the following 201-residue polypeptide: MLTHLRPALVLLTALTAITGLAYPLAMTGLAGAIFPARAAGSLIERDGRIVGSALIGQSFSQAHYFHGRPSVTTATDPADAGKTVPAPYNAANSMGSNLGPTSAVLAERVKGDLAALSAENPGAPVPVDLVTTSGSGLDPDIAPEAALFQVPRVARARGMPEDRLRALVTAQVEGRTFGVLGERRVNVLALNLAVDELARR.

The chain crosses the membrane as a helical span at residues 7–29 (PALVLLTALTAITGLAYPLAMTG).

It belongs to the KdpC family. As to quaternary structure, the system is composed of three essential subunits: KdpA, KdpB and KdpC.

Its subcellular location is the cell inner membrane. Functionally, part of the high-affinity ATP-driven potassium transport (or Kdp) system, which catalyzes the hydrolysis of ATP coupled with the electrogenic transport of potassium into the cytoplasm. This subunit acts as a catalytic chaperone that increases the ATP-binding affinity of the ATP-hydrolyzing subunit KdpB by the formation of a transient KdpB/KdpC/ATP ternary complex. The sequence is that of Potassium-transporting ATPase KdpC subunit from Methylorubrum populi (strain ATCC BAA-705 / NCIMB 13946 / BJ001) (Methylobacterium populi).